The primary structure comprises 555 residues: Potassium-transporting ATPase potassium-binding subunit (555 aa).

A run of 10 helical transmembrane segments spans residues 2 to 22 (IWVAVVITMLLFILVAKPTGI), 60 to 80 (QYALSLVLLNGFMIVVVYFIF), 130 to 150 (IGITFLMFAAPATTLAIVMAF), 173 to 193 (VFLPIAFIAALVFVALGVPQT), 246 to 266 (MSNILQMMLMMLLPTALPFTY), 278 to 298 (ILFVSLFMVFLLGFITITTSE), 374 to 394 (AGFVNIIMYAIIAVFISGLMV), 412 to 432 (LIAVTILFHPLLILGFSALAL), 483 to 503 (LVMFLGRYFSLITMLAVAASL), and 525 to 545 (GIFIGTIVIVGALTFFPMLVL).

The protein belongs to the KdpA family. In terms of assembly, the system is composed of three essential subunits: KdpA, KdpB and KdpC.

Its subcellular location is the cell membrane. Functionally, part of the high-affinity ATP-driven potassium transport (or Kdp) system, which catalyzes the hydrolysis of ATP coupled with the electrogenic transport of potassium into the cytoplasm. This subunit binds the extracellular potassium ions and delivers the ions to the membrane domain of KdpB through an intramembrane tunnel. The sequence is that of Potassium-transporting ATPase potassium-binding subunit from Bacillus mycoides (strain KBAB4) (Bacillus weihenstephanensis).